Reading from the N-terminus, the 406-residue chain is Phosphopentomutase (406 aa).

Positions 10, 305, 310, 346, 347, and 358 each coordinate Mn(2+).

Belongs to the phosphopentomutase family. It depends on Mn(2+) as a cofactor.

Its subcellular location is the cytoplasm. It carries out the reaction 2-deoxy-alpha-D-ribose 1-phosphate = 2-deoxy-D-ribose 5-phosphate. The catalysed reaction is alpha-D-ribose 1-phosphate = D-ribose 5-phosphate. It participates in carbohydrate degradation; 2-deoxy-D-ribose 1-phosphate degradation; D-glyceraldehyde 3-phosphate and acetaldehyde from 2-deoxy-alpha-D-ribose 1-phosphate: step 1/2. Its function is as follows. Isomerase that catalyzes the conversion of deoxy-ribose 1-phosphate (dRib-1-P) and ribose 1-phosphate (Rib-1-P) to deoxy-ribose 5-phosphate (dRib-5-P) and ribose 5-phosphate (Rib-5-P), respectively. This is Phosphopentomutase from Sinorhizobium fredii (strain NBRC 101917 / NGR234).